Reading from the N-terminus, the 304-residue chain is UDP-N-acetylenolpyruvoylglucosamine reductase (304 aa).

An FAD-binding PCMH-type domain is found at 32–198; that stretch reads RVGGPADILV…LSAELELQEG (167 aa). Arg-177 is an active-site residue. The Proton donor role is filled by Ser-227. Glu-297 is an active-site residue.

It belongs to the MurB family. FAD is required as a cofactor.

The protein localises to the cytoplasm. It catalyses the reaction UDP-N-acetyl-alpha-D-muramate + NADP(+) = UDP-N-acetyl-3-O-(1-carboxyvinyl)-alpha-D-glucosamine + NADPH + H(+). The protein operates within cell wall biogenesis; peptidoglycan biosynthesis. Cell wall formation. This Clostridioides difficile (strain 630) (Peptoclostridium difficile) protein is UDP-N-acetylenolpyruvoylglucosamine reductase.